Consider the following 146-residue polypeptide: MTVEISKVFVLMMLNLFLGASSSIWSVAPAAFQLPPCQLINQTVSLEKEGCPRCHAVETTICSGHCLTKDPIIKIPFSNVYQHVCTYRDLFYKTFEFPDCPPGVDPVVTYPVALSCHCSRCVMDTSDCTFESLQPDFCMNDIPFYY.

An N-terminal signal peptide occupies residues 1–22 (MTVEISKVFVLMMLNLFLGASS). Disulfide bonds link Cys37–Cys85, Cys51–Cys100, Cys54–Cys138, Cys62–Cys116, Cys66–Cys118, and Cys121–Cys128. A glycan (N-linked (GlcNAc...) asparagine) is linked at Asn41.

Belongs to the glycoprotein hormones subunit beta family. Heterodimer of an alpha and a beta chain.

The protein localises to the secreted. In terms of biological role, involved in gametogenesis and steroidogenesis. This Trichopodus trichopterus (Three spot gourami) protein is Gonadotropin subunit beta-2 (cgbb).